A 343-amino-acid polypeptide reads, in one-letter code: Cytoplasmic tRNA 2-thiolation protein 1 (343 aa).

Belongs to the TtcA family. CTU1/NCS6/ATPBD3 subfamily.

Its subcellular location is the cytoplasm. Its pathway is tRNA modification; 5-methoxycarbonylmethyl-2-thiouridine-tRNA biosynthesis. Plays a central role in 2-thiolation of mcm(5)S(2)U at tRNA wobble positions of tRNA(Lys), tRNA(Glu) and tRNA(Gln). Directly binds tRNAs and probably acts by catalyzing adenylation of tRNAs, an intermediate required for 2-thiolation. It is unclear whether it acts as a sulfurtransferase that transfers sulfur from thiocarboxylated URM1 onto the uridine of tRNAs at wobble position. The chain is Cytoplasmic tRNA 2-thiolation protein 1 from Drosophila grimshawi (Hawaiian fruit fly).